A 681-amino-acid chain; its full sequence is T-box-containing protein 2 (681 aa).

Positions 149-323 (LWDQFSRAGT…NNPFAKGFRE (175 aa)) form a DNA-binding region, T-box. Disordered stretches follow at residues 316–351 (PFAKGFREDGARAKKPRNQHNHFSDNDTSPYSEQRR), 456–489 (GITSHSPVQPVPHDNSFTYYNSSSPSSSDSNQSN), 521–558 (PNINIPNTVETNVHSSDSGIGSSPPTPSDDDASNLIPG), and 589–611 (ESGEANANSHTEDFSRNPACQSG). The segment covering 470 to 489 (NSFTYYNSSSPSSSDSNQSN) has biased composition (low complexity). Over residues 521-534 (PNINIPNTVETNVH) the composition is skewed to polar residues.

In terms of assembly, monomer. In terms of tissue distribution, differentiating muscle and tailbud tip.

Its subcellular location is the nucleus. Involved in the transcriptional regulation of genes required for muscle differentiation. Binds to a palindromic site (called T site) and activates gene transcription when bound to such a site. In Halocynthia roretzi (Sea squirt), this protein is T-box-containing protein 2 (T2).